We begin with the raw amino-acid sequence, 422 residues long: Biofilm regulator 1 (422 aa).

2 stretches are compositionally biased toward low complexity: residues 1–19 and 36–45; these read MSSS…TTSA and SGGSNNGNGS. Disordered regions lie at residues 1-86 and 116-207; these read MSSS…KCPP and RLSS…PSHP. Polar residues predominate over residues 46–61; sequence ALKSQISPRLSDTSRI. Composition is skewed to low complexity over residues 69–81 and 120–143; these read TSGS…SSTP and PTLP…LSPV. Over residues 146-159 the composition is skewed to polar residues; the sequence is VINTPPQQPQSVSA. Residues 160 to 194 are compositionally biased toward low complexity; the sequence is STSPNTQYQYYQYQQQSSPIQQQQQQQQATPAATP. Over residues 195-205 the composition is skewed to polar residues; sequence TVMQMAQNQPS. The GATA-type zinc finger occupies 282–307; that stretch reads CHRCGTTETPEWRRGPKGVRTLCNAC.

As to quaternary structure, interacts with HDA1.

Its subcellular location is the nucleus. Functionally, transcription factor required for hyphal growth, biofilm formation, and virulence. Promotes formation of both conventional and pheromone-stimulated biofilms. Binds and recruits HDA1 to promoters of hypha-specific genes in a rapamycin-dependent manner. Involved in the switch between two heritable states, the white and opaque states. These two cell types differ in many characteristics, including cell structure, mating competence, and virulence. Each state is heritable for many generations, and switching between states occurs stochastically at low frequency. The protein is Biofilm regulator 1 (BRG1) of Candida albicans (strain SC5314 / ATCC MYA-2876) (Yeast).